The sequence spans 698 residues: Polyribonucleotide nucleotidyltransferase (698 aa).

Mg(2+)-binding residues include Asp490 and Asp496. In terms of domain architecture, KH spans 557 to 616; the sequence is PKVVTMTIKPDKIRDVIGPGGKKINEIIDETGVKLDIEQDGTIFIGAVDQAMINRAREII. One can recognise an S1 motif domain in the interval 626–694; that stretch reads GQTYQATVKR…KQGRVNASHR (69 aa).

This sequence belongs to the polyribonucleotide nucleotidyltransferase family. The cofactor is Mg(2+).

The protein resides in the cytoplasm. It carries out the reaction RNA(n+1) + phosphate = RNA(n) + a ribonucleoside 5'-diphosphate. In terms of biological role, involved in mRNA degradation. Catalyzes the phosphorolysis of single-stranded polyribonucleotides processively in the 3'- to 5'-direction. This chain is Polyribonucleotide nucleotidyltransferase, found in Staphylococcus aureus (strain bovine RF122 / ET3-1).